Reading from the N-terminus, the 402-residue chain is uncharacterized protein (402 aa).

12 consecutive transmembrane segments (helical) span residues 23–43 (IVSV…PLAV), 52–72 (LGYG…ATLL), 90–110 (VLYG…SVAI), 121–141 (LLVG…AAIG), 158–178 (WNGI…VLLV), 180–200 (WLGL…GFAL), 228–248 (GMGL…ITLY), 255–275 (ANAV…RLLF), 282–302 (LGGF…LLLL), 309–329 (WVGL…FPAF), 351–371 (LFVD…ANLF), and 375–395 (SMFL…VALH).

The protein belongs to the major facilitator superfamily. YhhS family.

It localises to the cell inner membrane. This is an uncharacterized protein from Pseudomonas aeruginosa (strain ATCC 15692 / DSM 22644 / CIP 104116 / JCM 14847 / LMG 12228 / 1C / PRS 101 / PAO1).